A 225-amino-acid chain; its full sequence is Uridylate kinase (225 aa).

9-10 is a binding site for ATP; it reads GS. Residue G46 coordinates UMP. ATP is bound by residues G47 and R51. UMP contacts are provided by residues D67 and 115–121; that span reads THPAHTT. ATP-binding residues include T141, N142, Y147, and D150.

Belongs to the UMP kinase family. As to quaternary structure, homohexamer.

It localises to the cytoplasm. It catalyses the reaction UMP + ATP = UDP + ADP. Its pathway is pyrimidine metabolism; CTP biosynthesis via de novo pathway; UDP from UMP (UMPK route): step 1/1. Its activity is regulated as follows. Inhibited by UTP. Catalyzes the reversible phosphorylation of UMP to UDP. The chain is Uridylate kinase from Methanococcus maripaludis (strain C7 / ATCC BAA-1331).